The chain runs to 355 residues: Probable butyrate kinase (355 aa).

This sequence belongs to the acetokinase family.

It is found in the cytoplasm. The catalysed reaction is butanoate + ATP = butanoyl phosphate + ADP. The protein is Probable butyrate kinase of Listeria monocytogenes serotype 4b (strain CLIP80459).